Here is a 549-residue protein sequence, read N- to C-terminus: SET and MYND domain-containing protein DDB_G0277331 (549 aa).

One can recognise an SET domain in the interval 27 to 283 (KGIELRYCDG…KDEELFINYS (257 aa)). Cysteine 71, cysteine 74, cysteine 90, cysteine 93, cysteine 99, cysteine 103, histidine 111, and cysteine 115 together coordinate Zn(2+). Residues 71 to 115 (CDECLKNKLDLEEGKTLKRCSNCKLVYYCSTDCQTKAWKIHKQEC) form an MYND-type zinc finger. A coiled-coil region spans residues 340 to 401 (NINNNNNNNN…IIKNLQNKLS (62 aa)).

Belongs to the class V-like SAM-binding methyltransferase superfamily.

In terms of biological role, probable methyltransferase. The sequence is that of SET and MYND domain-containing protein DDB_G0277331 from Dictyostelium discoideum (Social amoeba).